The chain runs to 1084 residues: Teashirt homolog 1 (1084 aa).

Disordered regions lie at residues 49 to 108, 140 to 167, and 269 to 298; these read EETE…SVSY, NSAT…TAST, and GHYR…MEME. 2 stretches are compositionally biased toward polar residues: residues 57 to 71 and 140 to 152; these read QSYQ…TNQD and NSAT…SQKE. C2H2-type zinc fingers lie at residues 246 to 270 and 307 to 331; these read FRCK…ETGH and LKCM…KTKH. Over residues 269–284 the composition is skewed to basic and acidic residues; the sequence is GHYRDDNRDKDSEKTK. The C2H2-type 3; atypical zinc-finger motif lies at 416–440; sequence LKCMECGSSHDTLQQLTAHMMVTGH. Disordered regions lie at residues 467-534 and 653-728; these read SIPL…EKFE and TGKV…LKAK. Composition is skewed to basic and acidic residues over residues 496 to 534, 653 to 671, and 681 to 714; these read SEEK…EKFE, TGKV…EKSS, and KENK…ESTL. S771 is modified (phosphoserine). A disordered region spans residues 855 to 879; that stretch reads GRLTPKSSTPSTVSEKSDADGSSFE. Over residues 859 to 868 the composition is skewed to polar residues; that stretch reads PKSSTPSTVS. The segment at residues 891–961 is a DNA-binding region (homeobox; atypical); sequence RKGRQSNWNP…NVKYQLRRTG (71 aa). C2H2-type zinc fingers lie at residues 976 to 998 and 1044 to 1067; these read FFCN…LETH and FQCK…SKTH.

This sequence belongs to the teashirt C2H2-type zinc-finger protein family. In terms of assembly, interacts (via homeobox domain) with APBB1 (via PID domain 1).

The protein localises to the nucleus. In terms of biological role, probable transcriptional regulator involved in developmental processes. May act as a transcriptional repressor (Potential). In Mus musculus (Mouse), this protein is Teashirt homolog 1 (Tshz1).